Here is a 370-residue protein sequence, read N- to C-terminus: Ferrochelatase (370 aa).

2 residues coordinate Fe cation: histidine 210 and glutamate 291.

This sequence belongs to the ferrochelatase family.

The protein localises to the cytoplasm. The enzyme catalyses heme b + 2 H(+) = protoporphyrin IX + Fe(2+). The protein operates within porphyrin-containing compound metabolism; protoheme biosynthesis; protoheme from protoporphyrin-IX: step 1/1. Catalyzes the ferrous insertion into protoporphyrin IX. The chain is Ferrochelatase from Marinobacter nauticus (strain ATCC 700491 / DSM 11845 / VT8) (Marinobacter aquaeolei).